The following is a 288-amino-acid chain: Bis(5'-nucleosyl)-tetraphosphatase, symmetrical (288 aa).

The protein belongs to the Ap4A hydrolase family.

The enzyme catalyses P(1),P(4)-bis(5'-adenosyl) tetraphosphate + H2O = 2 ADP + 2 H(+). Its function is as follows. Hydrolyzes diadenosine 5',5'''-P1,P4-tetraphosphate to yield ADP. This is Bis(5'-nucleosyl)-tetraphosphatase, symmetrical from Baumannia cicadellinicola subsp. Homalodisca coagulata.